Reading from the N-terminus, the 459-residue chain is Argininosuccinate lyase (459 aa).

This sequence belongs to the lyase 1 family. Argininosuccinate lyase subfamily.

The protein localises to the cytoplasm. It catalyses the reaction 2-(N(omega)-L-arginino)succinate = fumarate + L-arginine. It participates in amino-acid biosynthesis; L-arginine biosynthesis; L-arginine from L-ornithine and carbamoyl phosphate: step 3/3. The chain is Argininosuccinate lyase from Buchnera aphidicola subsp. Schizaphis graminum (strain Sg).